The chain runs to 321 residues: Lipoyl synthase (321 aa).

[4Fe-4S] cluster-binding residues include Cys-68, Cys-73, Cys-79, Cys-94, Cys-98, Cys-101, and Ser-308. Residues 80 to 297 (FNHGTATFMI…KALADELGFT (218 aa)) form the Radical SAM core domain.

This sequence belongs to the radical SAM superfamily. Lipoyl synthase family. [4Fe-4S] cluster is required as a cofactor.

The protein resides in the cytoplasm. The enzyme catalyses [[Fe-S] cluster scaffold protein carrying a second [4Fe-4S](2+) cluster] + N(6)-octanoyl-L-lysyl-[protein] + 2 oxidized [2Fe-2S]-[ferredoxin] + 2 S-adenosyl-L-methionine + 4 H(+) = [[Fe-S] cluster scaffold protein] + N(6)-[(R)-dihydrolipoyl]-L-lysyl-[protein] + 4 Fe(3+) + 2 hydrogen sulfide + 2 5'-deoxyadenosine + 2 L-methionine + 2 reduced [2Fe-2S]-[ferredoxin]. It participates in protein modification; protein lipoylation via endogenous pathway; protein N(6)-(lipoyl)lysine from octanoyl-[acyl-carrier-protein]: step 2/2. In terms of biological role, catalyzes the radical-mediated insertion of two sulfur atoms into the C-6 and C-8 positions of the octanoyl moiety bound to the lipoyl domains of lipoate-dependent enzymes, thereby converting the octanoylated domains into lipoylated derivatives. The chain is Lipoyl synthase from Shewanella oneidensis (strain ATCC 700550 / JCM 31522 / CIP 106686 / LMG 19005 / NCIMB 14063 / MR-1).